A 58-amino-acid chain; its full sequence is UPF0337 protein CE1672 (58 aa).

Positions 1–39 (MGLGDKIRNTAEKASGKVKEATGKATDNEKLEAEGKTDQ) are enriched in basic and acidic residues. Residues 1–58 (MGLGDKIRNTAEKASGKVKEATGKATDNEKLEAEGKTDQFKGNAKNTVENAKDTLRGN) form a disordered region.

The protein belongs to the UPF0337 (CsbD) family.

The sequence is that of UPF0337 protein CE1672 from Corynebacterium efficiens (strain DSM 44549 / YS-314 / AJ 12310 / JCM 11189 / NBRC 100395).